The chain runs to 307 residues: uncharacterized protein (307 aa).

This is an uncharacterized protein from Sinorhizobium fredii (strain NBRC 101917 / NGR234).